The following is a 489-amino-acid chain: Potassium voltage-gated channel subfamily A member 7 (489 aa).

The chain crosses the membrane as a helical span at residues 176 to 196 (VLAVVSVLVILVSIVVFCLET). N224 carries an N-linked (GlcNAc...) asparagine glycan. The helical transmembrane segment at 242–262 (FFVVETLCICWFSFELLVRLV) threads the bilayer. Residue C264 is the site of S-palmitoyl cysteine attachment. A helical membrane pass occupies residues 274–294 (VMNLIDFVAILPYFVALGTEL). A helical; Voltage-sensor transmembrane segment spans residues 309-328 (ILRVIRLVRVFRIFKLSRHS). The chain crosses the membrane as a helical span at residues 345 to 365 (LGLLIFFLFIGVVLFSSAVYF). Residues 391–396 (TVGYGD) carry the Selectivity filter motif. The chain crosses the membrane as a helical span at residues 406 to 426 (IVGSLCAIAGVLTISLPVPVI).

The protein belongs to the potassium channel family. A (Shaker) (TC 1.A.1.2) subfamily. Kv1.7/KCNA7 sub-subfamily. In terms of assembly, heterotetramer of potassium channel proteins. In terms of tissue distribution, detected in heart, skeletal muscle, brain, and pancreatic islet cells.

The protein localises to the membrane. The catalysed reaction is K(+)(in) = K(+)(out). Functionally, mediates the voltage-dependent potassium ion permeability of excitable membranes. Assuming opened or closed conformations in response to the voltage difference across the membrane, the protein forms a potassium-selective channel through which potassium ions may pass in accordance with their electrochemical gradient. Channels formed by isoform 1 inactivate faster than channels formed by isoform 2. This chain is Potassium voltage-gated channel subfamily A member 7 (Kcna7), found in Mus musculus (Mouse).